Reading from the N-terminus, the 431-residue chain is Adenylosuccinate synthetase (431 aa).

GTP-binding positions include 13–19 and 41–43; these read GDEGKGK and GHT. Catalysis depends on D14, which acts as the Proton acceptor. Mg(2+) is bound by residues D14 and G41. IMP-binding positions include 14 to 17, 39 to 42, T130, R144, Q225, T240, and R304; these read DEGK and NAGH. Residue H42 is the Proton donor of the active site. Position 300–306 (300–306) interacts with substrate; that stretch reads SVTGRPR. GTP-binding positions include R306, 332–334, and 414–416; these read KLD and STG.

The protein belongs to the adenylosuccinate synthetase family. Homodimer. Mg(2+) is required as a cofactor.

It localises to the cytoplasm. It carries out the reaction IMP + L-aspartate + GTP = N(6)-(1,2-dicarboxyethyl)-AMP + GDP + phosphate + 2 H(+). It participates in purine metabolism; AMP biosynthesis via de novo pathway; AMP from IMP: step 1/2. In terms of biological role, plays an important role in the de novo pathway of purine nucleotide biosynthesis. Catalyzes the first committed step in the biosynthesis of AMP from IMP. The chain is Adenylosuccinate synthetase from Bordetella petrii (strain ATCC BAA-461 / DSM 12804 / CCUG 43448).